Consider the following 135-residue polypeptide: Probable histone H2A.7 (135 aa).

This sequence belongs to the histone H2A family. In terms of assembly, the nucleosome is a histone octamer containing two molecules each of H2A, H2B, H3 and H4 assembled in one H3-H4 heterotetramer and two H2A-H2B heterodimers. The octamer wraps approximately 147 bp of DNA.

The protein resides in the nucleus. The protein localises to the chromosome. Core component of nucleosome. Nucleosomes wrap and compact DNA into chromatin, limiting DNA accessibility to the cellular machineries which require DNA as a template. Histones thereby play a central role in transcription regulation, DNA repair, DNA replication and chromosomal stability. DNA accessibility is regulated via a complex set of post-translational modifications of histones, also called histone code, and nucleosome remodeling. The protein is Probable histone H2A.7 of Oryza sativa subsp. indica (Rice).